Here is a 136-residue protein sequence, read N- to C-terminus: Small ribosomal subunit protein uS9 (136 aa).

This sequence belongs to the universal ribosomal protein uS9 family.

The sequence is that of Small ribosomal subunit protein uS9 from Borreliella burgdorferi (strain ZS7) (Borrelia burgdorferi).